We begin with the raw amino-acid sequence, 351 residues long: Holliday junction branch migration complex subunit RuvB (351 aa).

The tract at residues 1-189 (MTAHDADWSD…FGFTAHMDFY (189 aa)) is large ATPase domain (RuvB-L). Residues leucine 28, arginine 29, glycine 70, lysine 73, threonine 74, serine 75, 136 to 138 (EDF), arginine 179, tyrosine 189, and arginine 226 contribute to the ATP site. Threonine 74 lines the Mg(2+) pocket. The tract at residues 190–260 (EPAELQQVLA…VAKAALAVYD (71 aa)) is small ATPAse domain (RuvB-S). The interval 263–351 (ELGLDRLDRA…AGLGQPGLFD (89 aa)) is head domain (RuvB-H). Arginine 318 and arginine 323 together coordinate DNA.

Belongs to the RuvB family. Homohexamer. Forms an RuvA(8)-RuvB(12)-Holliday junction (HJ) complex. HJ DNA is sandwiched between 2 RuvA tetramers; dsDNA enters through RuvA and exits via RuvB. An RuvB hexamer assembles on each DNA strand where it exits the tetramer. Each RuvB hexamer is contacted by two RuvA subunits (via domain III) on 2 adjacent RuvB subunits; this complex drives branch migration. In the full resolvosome a probable DNA-RuvA(4)-RuvB(12)-RuvC(2) complex forms which resolves the HJ.

Its subcellular location is the cytoplasm. It catalyses the reaction ATP + H2O = ADP + phosphate + H(+). In terms of biological role, the RuvA-RuvB-RuvC complex processes Holliday junction (HJ) DNA during genetic recombination and DNA repair, while the RuvA-RuvB complex plays an important role in the rescue of blocked DNA replication forks via replication fork reversal (RFR). RuvA specifically binds to HJ cruciform DNA, conferring on it an open structure. The RuvB hexamer acts as an ATP-dependent pump, pulling dsDNA into and through the RuvAB complex. RuvB forms 2 homohexamers on either side of HJ DNA bound by 1 or 2 RuvA tetramers; 4 subunits per hexamer contact DNA at a time. Coordinated motions by a converter formed by DNA-disengaged RuvB subunits stimulates ATP hydrolysis and nucleotide exchange. Immobilization of the converter enables RuvB to convert the ATP-contained energy into a lever motion, pulling 2 nucleotides of DNA out of the RuvA tetramer per ATP hydrolyzed, thus driving DNA branch migration. The RuvB motors rotate together with the DNA substrate, which together with the progressing nucleotide cycle form the mechanistic basis for DNA recombination by continuous HJ branch migration. Branch migration allows RuvC to scan DNA until it finds its consensus sequence, where it cleaves and resolves cruciform DNA. This chain is Holliday junction branch migration complex subunit RuvB, found in Mycobacterium avium (strain 104).